Consider the following 202-residue polypeptide: Imidazoleglycerol-phosphate dehydratase (202 aa).

The protein belongs to the imidazoleglycerol-phosphate dehydratase family.

The protein localises to the cytoplasm. It carries out the reaction D-erythro-1-(imidazol-4-yl)glycerol 3-phosphate = 3-(imidazol-4-yl)-2-oxopropyl phosphate + H2O. It participates in amino-acid biosynthesis; L-histidine biosynthesis; L-histidine from 5-phospho-alpha-D-ribose 1-diphosphate: step 6/9. The sequence is that of Imidazoleglycerol-phosphate dehydratase from Corynebacterium glutamicum (strain ATCC 13032 / DSM 20300 / JCM 1318 / BCRC 11384 / CCUG 27702 / LMG 3730 / NBRC 12168 / NCIMB 10025 / NRRL B-2784 / 534).